A 453-amino-acid chain; its full sequence is Allantoinase (453 aa).

Zn(2+)-binding residues include His59, His61, Lys146, His186, His242, and Asp315. N6-carboxylysine is present on Lys146.

Belongs to the metallo-dependent hydrolases superfamily. Allantoinase family. As to quaternary structure, homotetramer. It depends on Zn(2+) as a cofactor. Post-translationally, carboxylation allows a single lysine to coordinate two zinc ions.

It carries out the reaction (S)-allantoin + H2O = allantoate + H(+). Its pathway is nitrogen metabolism; (S)-allantoin degradation; allantoate from (S)-allantoin: step 1/1. In terms of biological role, catalyzes the conversion of allantoin (5-ureidohydantoin) to allantoic acid by hydrolytic cleavage of the five-member hydantoin ring. This chain is Allantoinase, found in Escherichia coli O9:H4 (strain HS).